A 176-amino-acid chain; its full sequence is Endoribonuclease YbeY (176 aa).

Zn(2+)-binding residues include H128, H132, and H138.

It belongs to the endoribonuclease YbeY family. It depends on Zn(2+) as a cofactor.

It is found in the cytoplasm. In terms of biological role, single strand-specific metallo-endoribonuclease involved in late-stage 70S ribosome quality control and in maturation of the 3' terminus of the 16S rRNA. This chain is Endoribonuclease YbeY, found in Zymomonas mobilis subsp. mobilis (strain ATCC 31821 / ZM4 / CP4).